The chain runs to 398 residues: 1-deoxy-D-xylulose 5-phosphate reductoisomerase (398 aa).

The NADPH site is built by Thr-11, Gly-12, Ser-13, Ile-14, Arg-38, Asn-39, and Asn-125. Lys-126 is a 1-deoxy-D-xylulose 5-phosphate binding site. Glu-127 contacts NADPH. Asp-151 serves as a coordination point for Mn(2+). 1-deoxy-D-xylulose 5-phosphate contacts are provided by Ser-152, Glu-153, Ser-179, and His-202. Glu-153 is a binding site for Mn(2+). Gly-208 is an NADPH binding site. Residues Ser-215, Asn-220, Lys-221, and Glu-224 each coordinate 1-deoxy-D-xylulose 5-phosphate. Glu-224 contacts Mn(2+).

This sequence belongs to the DXR family. The cofactor is Mg(2+). Mn(2+) is required as a cofactor.

It carries out the reaction 2-C-methyl-D-erythritol 4-phosphate + NADP(+) = 1-deoxy-D-xylulose 5-phosphate + NADPH + H(+). Its pathway is isoprenoid biosynthesis; isopentenyl diphosphate biosynthesis via DXP pathway; isopentenyl diphosphate from 1-deoxy-D-xylulose 5-phosphate: step 1/6. In terms of biological role, catalyzes the NADPH-dependent rearrangement and reduction of 1-deoxy-D-xylulose-5-phosphate (DXP) to 2-C-methyl-D-erythritol 4-phosphate (MEP). The protein is 1-deoxy-D-xylulose 5-phosphate reductoisomerase of Burkholderia vietnamiensis (strain G4 / LMG 22486) (Burkholderia cepacia (strain R1808)).